The following is an 86-amino-acid chain: Small ribosomal subunit protein bS20 (86 aa).

Positions M1–M27 are disordered.

The protein belongs to the bacterial ribosomal protein bS20 family.

Binds directly to 16S ribosomal RNA. This Vibrio cholerae serotype O1 (strain ATCC 39541 / Classical Ogawa 395 / O395) protein is Small ribosomal subunit protein bS20.